The following is a 276-amino-acid chain: Putative pyruvate, phosphate dikinase regulatory protein (276 aa).

153–160 provides a ligand contact to ADP; that stretch reads GISRTSKT.

This sequence belongs to the pyruvate, phosphate/water dikinase regulatory protein family. PDRP subfamily.

It catalyses the reaction N(tele)-phospho-L-histidyl/L-threonyl-[pyruvate, phosphate dikinase] + ADP = N(tele)-phospho-L-histidyl/O-phospho-L-threonyl-[pyruvate, phosphate dikinase] + AMP + H(+). It carries out the reaction N(tele)-phospho-L-histidyl/O-phospho-L-threonyl-[pyruvate, phosphate dikinase] + phosphate + H(+) = N(tele)-phospho-L-histidyl/L-threonyl-[pyruvate, phosphate dikinase] + diphosphate. Bifunctional serine/threonine kinase and phosphorylase involved in the regulation of the pyruvate, phosphate dikinase (PPDK) by catalyzing its phosphorylation/dephosphorylation. The sequence is that of Putative pyruvate, phosphate dikinase regulatory protein from Brucella anthropi (strain ATCC 49188 / DSM 6882 / CCUG 24695 / JCM 21032 / LMG 3331 / NBRC 15819 / NCTC 12168 / Alc 37) (Ochrobactrum anthropi).